A 259-amino-acid polypeptide reads, in one-letter code: tRNA pseudouridine synthase A (259 aa).

The active-site Nucleophile is Asp-51. Tyr-109 is a binding site for substrate.

This sequence belongs to the tRNA pseudouridine synthase TruA family. In terms of assembly, homodimer.

The catalysed reaction is uridine(38/39/40) in tRNA = pseudouridine(38/39/40) in tRNA. In terms of biological role, formation of pseudouridine at positions 38, 39 and 40 in the anticodon stem and loop of transfer RNAs. The chain is tRNA pseudouridine synthase A from Nitrosococcus oceani (strain ATCC 19707 / BCRC 17464 / JCM 30415 / NCIMB 11848 / C-107).